The primary structure comprises 73 residues: Translation initiation factor IF-1 (73 aa).

Positions 1 to 73 (MPKKDGVIEI…SRGRIVYRYK (73 aa)) constitute an S1-like domain.

Belongs to the IF-1 family. Component of the 30S ribosomal translation pre-initiation complex which assembles on the 30S ribosome in the order IF-2 and IF-3, IF-1 and N-formylmethionyl-tRNA(fMet); mRNA recruitment can occur at any time during PIC assembly.

It localises to the cytoplasm. In terms of biological role, one of the essential components for the initiation of protein synthesis. Stabilizes the binding of IF-2 and IF-3 on the 30S subunit to which N-formylmethionyl-tRNA(fMet) subsequently binds. Helps modulate mRNA selection, yielding the 30S pre-initiation complex (PIC). Upon addition of the 50S ribosomal subunit IF-1, IF-2 and IF-3 are released leaving the mature 70S translation initiation complex. This is Translation initiation factor IF-1 from Kineococcus radiotolerans (strain ATCC BAA-149 / DSM 14245 / SRS30216).